The chain runs to 617 residues: tRNA uridine 5-carboxymethylaminomethyl modification enzyme MnmG (617 aa).

Residues 9 to 14 (GAGHAG), Val-120, and Thr-175 contribute to the FAD site. 267–281 (GPRYCPSIEDKVVRF) serves as a coordination point for NAD(+). Gln-364 is an FAD binding site.

This sequence belongs to the MnmG family. As to quaternary structure, homodimer. Heterotetramer of two MnmE and two MnmG subunits. FAD serves as cofactor.

The protein localises to the cytoplasm. In terms of biological role, NAD-binding protein involved in the addition of a carboxymethylaminomethyl (cmnm) group at the wobble position (U34) of certain tRNAs, forming tRNA-cmnm(5)s(2)U34. In Onion yellows phytoplasma (strain OY-M), this protein is tRNA uridine 5-carboxymethylaminomethyl modification enzyme MnmG.